Here is a 289-residue protein sequence, read N- to C-terminus: Diaminopimelate epimerase (289 aa).

3 residues coordinate substrate: Asn-13, Gln-47, and Asn-67. The active-site Proton donor is Cys-76. Substrate is bound by residues Gly-77–Asn-78, Asn-167, Asn-200, and Glu-218–Arg-219. Cys-227 serves as the catalytic Proton acceptor. Position 228–229 (Gly-228–Thr-229) interacts with substrate.

It belongs to the diaminopimelate epimerase family. In terms of assembly, homodimer.

It localises to the cytoplasm. The catalysed reaction is (2S,6S)-2,6-diaminopimelate = meso-2,6-diaminopimelate. The protein operates within amino-acid biosynthesis; L-lysine biosynthesis via DAP pathway; DL-2,6-diaminopimelate from LL-2,6-diaminopimelate: step 1/1. Its function is as follows. Catalyzes the stereoinversion of LL-2,6-diaminopimelate (L,L-DAP) to meso-diaminopimelate (meso-DAP), a precursor of L-lysine and an essential component of the bacterial peptidoglycan. This chain is Diaminopimelate epimerase, found in Burkholderia mallei (strain NCTC 10247).